A 644-amino-acid chain; its full sequence is Core protein VP4 (644 aa).

It belongs to the orbivirus VP4 family.

Its subcellular location is the virion. The VP4 protein is one of the five proteins (with VP1, VP3, VP6 and VP7) which form the inner capsid of the virus. The chain is Core protein VP4 (Segment-4) from Antilocapra americana (Pronghorn).